The primary structure comprises 399 residues: UDP-N-acetylglucosamine--N-acetylmuramyl-(pentapeptide) pyrophosphoryl-undecaprenol N-acetylglucosamine transferase (399 aa).

Residues Thr29–Gly31, Asn148, Arg185, Ser219, and Gln318 contribute to the UDP-N-acetyl-alpha-D-glucosamine site.

This sequence belongs to the glycosyltransferase 28 family. MurG subfamily.

Its subcellular location is the cell membrane. The catalysed reaction is di-trans,octa-cis-undecaprenyl diphospho-N-acetyl-alpha-D-muramoyl-L-alanyl-D-glutamyl-meso-2,6-diaminopimeloyl-D-alanyl-D-alanine + UDP-N-acetyl-alpha-D-glucosamine = di-trans,octa-cis-undecaprenyl diphospho-[N-acetyl-alpha-D-glucosaminyl-(1-&gt;4)]-N-acetyl-alpha-D-muramoyl-L-alanyl-D-glutamyl-meso-2,6-diaminopimeloyl-D-alanyl-D-alanine + UDP + H(+). It participates in cell wall biogenesis; peptidoglycan biosynthesis. Cell wall formation. Catalyzes the transfer of a GlcNAc subunit on undecaprenyl-pyrophosphoryl-MurNAc-pentapeptide (lipid intermediate I) to form undecaprenyl-pyrophosphoryl-MurNAc-(pentapeptide)GlcNAc (lipid intermediate II). The chain is UDP-N-acetylglucosamine--N-acetylmuramyl-(pentapeptide) pyrophosphoryl-undecaprenol N-acetylglucosamine transferase from Mycobacterium ulcerans (strain Agy99).